The sequence spans 121 residues: uncharacterized protein (121 aa).

The CHCH domain occupies 43–86 (LKECSSHVAAFADCSKDKYISVVWECRELQQLMKNCLVEYTTSE). Short sequence motifs (cx9C motif) lie at residues 46–56 (CSSHVAAFADC) and 68–78 (CRELQQLMKNC). Disulfide bonds link cysteine 46/cysteine 78 and cysteine 56/cysteine 68.

It belongs to the CMC family.

This is an uncharacterized protein from Dictyostelium discoideum (Social amoeba).